The primary structure comprises 209 residues: MNNMKTFKFLTALFATAILTACTLDMERPTNVQYIDKTDAIWQQHLQKIQKIQSYQAKGQIGYISPTERFSSRFEWQYQNPKSYTLKLYSLISKSTLLIQMHQSGMTISDNNDNQQSAANAKLLLQEIIGMDVPLEHLAYWLKGQPAMNADYQVGTNHLLGAFTYHVDGSQWTADYLTYHSNNSMPENILLKNDSTKQTLKIRVDEWIY.

Residues 1–21 (MNNMKTFKFLTALFATAILTA) form the signal peptide. A lipid anchor (N-palmitoyl cysteine) is attached at cysteine 22. A lipid anchor (S-diacylglycerol cysteine) is attached at cysteine 22.

This sequence belongs to the LolB family. Monomer.

The protein localises to the cell outer membrane. In terms of biological role, plays a critical role in the incorporation of lipoproteins in the outer membrane after they are released by the LolA protein. The polypeptide is Outer-membrane lipoprotein LolB (Haemophilus influenzae (strain 86-028NP)).